Reading from the N-terminus, the 969-residue chain is Leucine--tRNA ligase (969 aa).

Positions 78 to 89 (PYPSGEGLHVGH) match the 'HIGH' region motif. A 'KMSKS' region motif is present at residues 739-743 (KIGKS). An ATP-binding site is contributed by lysine 742.

Belongs to the class-I aminoacyl-tRNA synthetase family.

Its subcellular location is the cytoplasm. The catalysed reaction is tRNA(Leu) + L-leucine + ATP = L-leucyl-tRNA(Leu) + AMP + diphosphate. The protein is Leucine--tRNA ligase of Mycobacterium tuberculosis (strain ATCC 25177 / H37Ra).